The following is a 142-amino-acid chain: ATP synthase epsilon chain (142 aa).

Belongs to the ATPase epsilon chain family. In terms of assembly, F-type ATPases have 2 components, CF(1) - the catalytic core - and CF(0) - the membrane proton channel. CF(1) has five subunits: alpha(3), beta(3), gamma(1), delta(1), epsilon(1). CF(0) has three main subunits: a, b and c.

It is found in the cell inner membrane. Its function is as follows. Produces ATP from ADP in the presence of a proton gradient across the membrane. The polypeptide is ATP synthase epsilon chain (Pasteurella multocida (strain Pm70)).